Consider the following 301-residue polypeptide: Probable alpha-L-glutamate ligase (301 aa).

The region spanning 104 to 287 (LQLLSRRGIG…VAGMIIEHLE (184 aa)) is the ATP-grasp domain. Residues lysine 141, 178–179 (EY), aspartate 187, and 211–213 (RSN) each bind ATP. 3 residues coordinate Mg(2+): aspartate 248, glutamate 260, and asparagine 262. The Mn(2+) site is built by aspartate 248, glutamate 260, and asparagine 262.

This sequence belongs to the RimK family. The cofactor is Mg(2+). Mn(2+) serves as cofactor.

The chain is Probable alpha-L-glutamate ligase from Pseudomonas putida (strain GB-1).